Consider the following 299-residue polypeptide: 4-hydroxybenzoate octaprenyltransferase (299 aa).

The next 8 membrane-spanning stretches (helical) occupy residues 33–53 (VGFLLLLWPTWWALWLAADGV), 56–76 (WWTLCVFTTGIWLTRSAGCVI), 105–125 (NALLMFGTLMLIAFGLVLTMN), 151–171 (LPQVYLGIAFGWGIPMAFAAI), 180–200 (WLLYVANILWTTAYDTWYAMV), 214–234 (AILFADLDLVVQGVLYTLMLL), 247–267 (HTYWISLISAVALIGYQFIIA), and 278–298 (AFMHNNWVGMTIFAGIALATT).

The protein belongs to the UbiA prenyltransferase family. Mg(2+) serves as cofactor.

Its subcellular location is the cell inner membrane. It catalyses the reaction all-trans-octaprenyl diphosphate + 4-hydroxybenzoate = 4-hydroxy-3-(all-trans-octaprenyl)benzoate + diphosphate. The protein operates within cofactor biosynthesis; ubiquinone biosynthesis. Functionally, catalyzes the prenylation of para-hydroxybenzoate (PHB) with an all-trans polyprenyl group. Mediates the second step in the final reaction sequence of ubiquinone-8 (UQ-8) biosynthesis, which is the condensation of the polyisoprenoid side chain with PHB, generating the first membrane-bound Q intermediate 3-octaprenyl-4-hydroxybenzoate. In Xylella fastidiosa (strain M23), this protein is 4-hydroxybenzoate octaprenyltransferase.